The chain runs to 657 residues: 2',3'-cyclic-nucleotide 2'-phosphodiesterase/3'-nucleotidase (657 aa).

Positions 1-26 (MMNRRHFIQISATSILALSANRFAMA) are cleaved as a signal peptide. A divalent metal cation-binding residues include D41, H43, D86, N126, H235, H267, and H269. Substrate is bound by residues Y450 and 554–559 (YRAYGN).

The protein belongs to the 5'-nucleotidase family. Requires a divalent metal cation as cofactor.

It is found in the periplasm. The catalysed reaction is a nucleoside 2',3'-cyclic phosphate + H2O = a nucleoside 3'-phosphate + H(+). It catalyses the reaction a ribonucleoside 3'-phosphate + H2O = a ribonucleoside + phosphate. Its function is as follows. This bifunctional enzyme catalyzes two consecutive reactions during ribonucleic acid degradation. Converts a 2',3'-cyclic nucleotide to a 3'-nucleotide and then the 3'-nucleotide to the corresponding nucleoside and phosphate. This is 2',3'-cyclic-nucleotide 2'-phosphodiesterase/3'-nucleotidase (cpdB) from Haemophilus influenzae (strain ATCC 51907 / DSM 11121 / KW20 / Rd).